Consider the following 392-residue polypeptide: Zinc finger protein ham-2 (392 aa).

C2H2-type zinc fingers lie at residues 16-39 (FPCS…MQAH) and 43-66 (YTCT…YRVH). The C2H2-type 3; degenerate zinc finger occupies 72-95 (FMCRCCNWAFPDKTSLHIHMQSML). Disordered regions lie at residues 106–130 (LAKS…PFSP) and 278–303 (HISH…HSGE). Over residues 112-123 (VVDSTSESGSPR) the composition is skewed to polar residues. The span at 289–303 (SDSHISGGSSSHSGE) shows a compositional bias: low complexity.

The protein localises to the nucleus. Its function is as follows. Probable transcription factor that acts downstream of egl-15, to promote migration of the HSN motor neurons from the tail to the gonad primordium during HSN cell differentiation. In Caenorhabditis elegans, this protein is Zinc finger protein ham-2.